A 96-amino-acid polypeptide reads, in one-letter code: Aspartyl/glutamyl-tRNA(Asn/Gln) amidotransferase subunit C (96 aa).

The protein belongs to the GatC family. In terms of assembly, heterotrimer of A, B and C subunits.

The catalysed reaction is L-glutamyl-tRNA(Gln) + L-glutamine + ATP + H2O = L-glutaminyl-tRNA(Gln) + L-glutamate + ADP + phosphate + H(+). It carries out the reaction L-aspartyl-tRNA(Asn) + L-glutamine + ATP + H2O = L-asparaginyl-tRNA(Asn) + L-glutamate + ADP + phosphate + 2 H(+). Functionally, allows the formation of correctly charged Asn-tRNA(Asn) or Gln-tRNA(Gln) through the transamidation of misacylated Asp-tRNA(Asn) or Glu-tRNA(Gln) in organisms which lack either or both of asparaginyl-tRNA or glutaminyl-tRNA synthetases. The reaction takes place in the presence of glutamine and ATP through an activated phospho-Asp-tRNA(Asn) or phospho-Glu-tRNA(Gln). This is Aspartyl/glutamyl-tRNA(Asn/Gln) amidotransferase subunit C from Symbiobacterium thermophilum (strain DSM 24528 / JCM 14929 / IAM 14863 / T).